Consider the following 243-residue polypeptide: Venom protease (243 aa).

The Peptidase S1 domain maps to 1-243 (VVGGKPAKLG…DSFILPALKK (243 aa)). A disulfide bridge connects residues Cys-34 and Cys-50. Active-site charge relay system residues include His-49 and Asp-97. Intrachain disulfides connect Cys-165–Cys-178 and Cys-189–Cys-217. Ser-193 functions as the Charge relay system in the catalytic mechanism.

Belongs to the peptidase S1 family. Expressed by the venom duct.

The protein localises to the secreted. The chain is Venom protease from Bombus pensylvanicus (American bumblebee).